Consider the following 65-residue polypeptide: Prokaryotic ubiquitin-like protein UBact (65 aa).

Polar residues predominate over residues methionine 1–methionine 17. The tract at residues methionine 1–glutamate 65 is disordered. A compositionally biased stretch (basic and acidic residues) spans lysine 35–glutamate 65. Glutamate 65 is covalently cross-linked (Isoglutamyl lysine isopeptide (Glu-Lys) (interchain with K-? in acceptor proteins)).

This sequence belongs to the ubiquitin-like protein UBact family.

May function as a protein modifier covalently attached to lysine residues of substrate proteins. This may serve to target the modified proteins for degradation by proteasomes. In Methylacidiphilum infernorum (isolate V4) (Methylokorus infernorum (strain V4)), this protein is Prokaryotic ubiquitin-like protein UBact.